Here is a 539-residue protein sequence, read N- to C-terminus: Chaperonin GroEL (539 aa).

ATP-binding positions include 29–32, 86–90, Gly-413, 479–481, and Asp-495; these read TLGP, DGTTT, and DAL.

Belongs to the chaperonin (HSP60) family. Forms a cylinder of 14 subunits composed of two heptameric rings stacked back-to-back. Interacts with the co-chaperonin GroES.

It is found in the cytoplasm. It catalyses the reaction ATP + H2O + a folded polypeptide = ADP + phosphate + an unfolded polypeptide.. Together with its co-chaperonin GroES, plays an essential role in assisting protein folding. The GroEL-GroES system forms a nano-cage that allows encapsulation of the non-native substrate proteins and provides a physical environment optimized to promote and accelerate protein folding. The chain is Chaperonin GroEL from Pseudothermotoga lettingae (strain ATCC BAA-301 / DSM 14385 / NBRC 107922 / TMO) (Thermotoga lettingae).